A 467-amino-acid chain; its full sequence is Light-independent protochlorophyllide reductase subunit N (467 aa).

3 residues coordinate [4Fe-4S] cluster: cysteine 24, cysteine 49, and cysteine 109.

This sequence belongs to the BchN/ChlN family. In terms of assembly, protochlorophyllide reductase is composed of three subunits; ChlL, ChlN and ChlB. Forms a heterotetramer of two ChlB and two ChlN subunits. [4Fe-4S] cluster is required as a cofactor.

It carries out the reaction chlorophyllide a + oxidized 2[4Fe-4S]-[ferredoxin] + 2 ADP + 2 phosphate = protochlorophyllide a + reduced 2[4Fe-4S]-[ferredoxin] + 2 ATP + 2 H2O. It functions in the pathway porphyrin-containing compound metabolism; chlorophyll biosynthesis (light-independent). Component of the dark-operative protochlorophyllide reductase (DPOR) that uses Mg-ATP and reduced ferredoxin to reduce ring D of protochlorophyllide (Pchlide) to form chlorophyllide a (Chlide). This reaction is light-independent. The NB-protein (ChlN-ChlB) is the catalytic component of the complex. In Leptolyngbya boryana (Plectonema boryanum), this protein is Light-independent protochlorophyllide reductase subunit N.